The following is a 66-amino-acid chain: UPF0337 protein SpyM3_1723 (66 aa).

Basic and acidic residues predominate over residues 1-10 (MSEEKLKSKI). The disordered stretch occupies residues 1–23 (MSEEKLKSKIEQASGGLKEGAGK).

The protein belongs to the UPF0337 (CsbD) family.

The chain is UPF0337 protein SpyM3_1723 from Streptococcus pyogenes serotype M3 (strain ATCC BAA-595 / MGAS315).